Reading from the N-terminus, the 82-residue chain is Mitotic-spindle organizing protein 1 (82 aa).

Alanine 2 is subject to N-acetylalanine.

Belongs to the MOZART1 family. In terms of assembly, associates with the gamma-tubulin ring complex (gTuRC) consisting of TUBGCP2, TUBGCP3, TUBGCP4, TUBGCP5 and TUBGCP6 and gamma-tubulin TUBG1 or TUBG2; within the complex, interacts with TUBGCP3 and TUBGCP6 to form a luminal bridge with actin that stabilizes the initial structure during complex assembly. Interacts with TUBG1.

The protein resides in the cytoplasm. The protein localises to the cytoskeleton. Its subcellular location is the microtubule organizing center. It is found in the centrosome. It localises to the spindle. Functionally, required for the recruitment and the assembly of the gamma-tubulin ring complex (gTuRC) at the centrosome. The gTuRC regulates the minus-end nucleation of alpha-beta tubulin heterodimers that grow into microtubule protafilaments, a critical step in centrosome duplication and spindle formation. The chain is Mitotic-spindle organizing protein 1 (MZT1) from Homo sapiens (Human).